The sequence spans 261 residues: 14-3-3 protein 9 (261 aa).

Residues 239–261 (PEDAEDAQKGDATNKAGGGEDAE) form a disordered region.

It belongs to the 14-3-3 family. As to quaternary structure, homodimer.

This Solanum lycopersicum (Tomato) protein is 14-3-3 protein 9 (TFT9).